We begin with the raw amino-acid sequence, 277 residues long: MVVKIGILKCGNIGMSPVVDLCLDERADRNDIDVRVLGSGAKMNPDQVEEVAKKMVEEVKPDFIVYIGPNPAAPGPKKAREILSAGGIPAVIIGDAPGIKDKDAMAEEGLGYVLIKCDPMIGARRQFLDPVEMAMFNADVIRVLAGTGALRVVQNAIDDMVFAVEEGKEIPLPKIVITEQKAVEAMDFANPYAKAKAMAAFVMAEKVADIDVKGCFMTKEMEKYIPIVASAHETIRYAAKLVDEARELEKATDAVSRKPHAGAGQILNKCKLMEKPE.

This sequence belongs to the MTD family.

It carries out the reaction 5,10-methylenetetrahydromethanopterin + oxidized coenzyme F420-(gamma-L-Glu)(n) + 2 H(+) = 5,10-methenyl-5,6,7,8-tetrahydromethanopterin + reduced coenzyme F420-(gamma-L-Glu)(n). Its pathway is one-carbon metabolism; methanogenesis from CO(2); 5,10-methylene-5,6,7,8-tetrahydromethanopterin from 5,10-methenyl-5,6,7,8-tetrahydromethanopterin (coenzyme F420 route): step 1/1. In terms of biological role, catalyzes the reversible reduction of methenyl-H(4)MPT(+) to methylene-H(4)MPT. The sequence is that of F420-dependent methylenetetrahydromethanopterin dehydrogenase from Methanococcus maripaludis (strain C5 / ATCC BAA-1333).